Here is a 134-residue protein sequence, read N- to C-terminus: Large ribosomal subunit protein eL32 (134 aa).

Belongs to the eukaryotic ribosomal protein eL32 family.

The sequence is that of Large ribosomal subunit protein eL32 (rpl32e) from Picrophilus torridus (strain ATCC 700027 / DSM 9790 / JCM 10055 / NBRC 100828 / KAW 2/3).